A 455-amino-acid chain; its full sequence is Folate transporter 2 (455 aa).

8 helical membrane-spanning segments follow: residues 42-64, 84-103, 110-131, 137-157, 177-195, 201-221, 242-261, and 281-301; these read IVVY…IYYL, YIPF…FSIF, YLFL…LNLS, LILF…EALV, IASK…GYFL, EYIF…CLFL, FINT…YMSG, and SFMG…IIIY. N-linked (GlcNAc...) asparagine glycosylation is present at N307. 2 helical membrane-spanning segments follow: residues 313–331 and 347–367; these read TLII…PIIL and VLSG…PLFI. N-linked (GlcNAc...) asparagine glycosylation is present at N416. Residues 417-438 form a helical membrane-spanning segment; it reads LSLYILTCGFFLLFSLTLVPLL.

This sequence belongs to the major facilitator superfamily. Folate-biopterin transporter (TC 2.A.71) family.

Its subcellular location is the cell membrane. The catalysed reaction is folate(in) + H(+)(in) = folate(out) + H(+)(out). The enzyme catalyses (6S)-5-methyl-5,6,7,8-tetrahydrofolate(in) + H(+)(in) = (6S)-5-methyl-5,6,7,8-tetrahydrofolate(out) + H(+)(out). With respect to regulation, transport of folates is inhibited by probenecid and methotrexate. In terms of biological role, folate transporter with broad substrate specificity. Transports folic acid, folinic acid, pteroic acid, dihydropteroic acid, the folate precursor p-amino benzoic acid (pABA) and the human folate catabolite pABA monoglutamate. Can transport 5-methyltetrahydrofolate with low efficiency. This chain is Folate transporter 2, found in Plasmodium falciparum (isolate 3D7).